A 180-amino-acid chain; its full sequence is Crossover junction endodeoxyribonuclease RuvC (180 aa).

Catalysis depends on residues Asp7, Glu66, and Asp138. Asp7, Glu66, and Asp138 together coordinate Mg(2+).

It belongs to the RuvC family. Homodimer which binds Holliday junction (HJ) DNA. The HJ becomes 2-fold symmetrical on binding to RuvC with unstacked arms; it has a different conformation from HJ DNA in complex with RuvA. In the full resolvosome a probable DNA-RuvA(4)-RuvB(12)-RuvC(2) complex forms which resolves the HJ. It depends on Mg(2+) as a cofactor.

It is found in the cytoplasm. The enzyme catalyses Endonucleolytic cleavage at a junction such as a reciprocal single-stranded crossover between two homologous DNA duplexes (Holliday junction).. Functionally, the RuvA-RuvB-RuvC complex processes Holliday junction (HJ) DNA during genetic recombination and DNA repair. Endonuclease that resolves HJ intermediates. Cleaves cruciform DNA by making single-stranded nicks across the HJ at symmetrical positions within the homologous arms, yielding a 5'-phosphate and a 3'-hydroxyl group; requires a central core of homology in the junction. The consensus cleavage sequence is 5'-(A/T)TT(C/G)-3'. Cleavage occurs on the 3'-side of the TT dinucleotide at the point of strand exchange. HJ branch migration catalyzed by RuvA-RuvB allows RuvC to scan DNA until it finds its consensus sequence, where it cleaves and resolves the cruciform DNA. This chain is Crossover junction endodeoxyribonuclease RuvC, found in Burkholderia vietnamiensis (strain G4 / LMG 22486) (Burkholderia cepacia (strain R1808)).